The sequence spans 341 residues: NADH-quinone oxidoreductase subunit H (341 aa).

8 helical membrane passes run 16–36 (LLII…AVAY), 86–106 (VVFV…WAVI), 119–139 (VGVL…IMAG), 165–185 (IGFI…SDVV), 191–211 (MWFI…GLAE), 254–274 (GAMT…LGWL), 276–296 (IPGL…FLWV), and 315–335 (VFLP…TAFG).

Belongs to the complex I subunit 1 family. As to quaternary structure, NDH-1 is composed of 14 different subunits. Subunits NuoA, H, J, K, L, M, N constitute the membrane sector of the complex.

The protein localises to the cell inner membrane. The enzyme catalyses a quinone + NADH + 5 H(+)(in) = a quinol + NAD(+) + 4 H(+)(out). Its function is as follows. NDH-1 shuttles electrons from NADH, via FMN and iron-sulfur (Fe-S) centers, to quinones in the respiratory chain. The immediate electron acceptor for the enzyme in this species is believed to be ubiquinone. Couples the redox reaction to proton translocation (for every two electrons transferred, four hydrogen ions are translocated across the cytoplasmic membrane), and thus conserves the redox energy in a proton gradient. This subunit may bind ubiquinone. This Paramagnetospirillum magneticum (strain ATCC 700264 / AMB-1) (Magnetospirillum magneticum) protein is NADH-quinone oxidoreductase subunit H.